A 200-amino-acid polypeptide reads, in one-letter code: ATP-dependent Clp protease proteolytic subunit (200 aa).

The Nucleophile role is filled by S99. H124 is an active-site residue.

This sequence belongs to the peptidase S14 family. As to quaternary structure, fourteen ClpP subunits assemble into 2 heptameric rings which stack back to back to give a disk-like structure with a central cavity, resembling the structure of eukaryotic proteasomes.

The protein localises to the cytoplasm. It catalyses the reaction Hydrolysis of proteins to small peptides in the presence of ATP and magnesium. alpha-casein is the usual test substrate. In the absence of ATP, only oligopeptides shorter than five residues are hydrolyzed (such as succinyl-Leu-Tyr-|-NHMec, and Leu-Tyr-Leu-|-Tyr-Trp, in which cleavage of the -Tyr-|-Leu- and -Tyr-|-Trp bonds also occurs).. Cleaves peptides in various proteins in a process that requires ATP hydrolysis. Has a chymotrypsin-like activity. Plays a major role in the degradation of misfolded proteins. This is ATP-dependent Clp protease proteolytic subunit from Syntrophomonas wolfei subsp. wolfei (strain DSM 2245B / Goettingen).